Consider the following 361-residue polypeptide: MTDKIKVGLIFGGNSSEYEVSIMSAHNIYEEIDTNKFDVYPMWITNDGYLADDADSRKVLDNPKMEVANPHKVANISNIIELKDRPEIDVFFPIVHGNLGEDGCLQGLFRVLDKPFVGDDVLAAAVTMDKEMTKILAQRAGVPVAKWIAVKRFEYNDPDNEKLDYEYVASQLGSDLFVKPSNQGSSVGVSHVTNEKEYKVALAEAFKYDDKVLVEETVHGTEVETAVLGNDKPIVAGVGQIINAKDSFYTYENKYDDDSTSTLEIPAKLPEGIVETVRKNALKVFQATECSGLARIDSMLRSEDNEVVLTEVNALPGFTNISMYPKLFEEIGIPYTDLITKLIDYAMERYDHKKTLLHKHD.

In terms of domain architecture, ATP-grasp spans 134-344; that stretch reads KILAQRAGVP…YTDLITKLID (211 aa). 169–224 lines the ATP pocket; the sequence is ASQLGSDLFVKPSNQGSSVGVSHVTNEKEYKVALAEAFKYDDKVLVEETVHGTEVE. Mg(2+) contacts are provided by Asp-297, Glu-311, and Asn-313.

The protein belongs to the D-alanine--D-alanine ligase family. Mg(2+) is required as a cofactor. Requires Mn(2+) as cofactor.

It localises to the cytoplasm. It catalyses the reaction 2 D-alanine + ATP = D-alanyl-D-alanine + ADP + phosphate + H(+). It participates in cell wall biogenesis; peptidoglycan biosynthesis. In terms of biological role, cell wall formation. The sequence is that of D-alanine--D-alanine ligase from Lactobacillus johnsonii (strain CNCM I-12250 / La1 / NCC 533).